A 415-amino-acid chain; its full sequence is Na(+)-translocating NADH-quinone reductase subunit B (415 aa).

The next 4 helical transmembrane spans lie at 23–40, 56–76, 129–149, and 164–184; these read WFALYEAAATLFYTPGLV, IMIMVWLAVFPAMFWGMYNAG, FLPIYATVFIVGGFWEVLFCM, and ILFALIVPPTLPLWQAALGIT. Thr236 carries the post-translational modification FMN phosphoryl threonine. Helical transmembrane passes span 275 to 295, 297 to 317, 325 to 345, 358 to 378, and 381 to 401; these read VSTLALMIGAAFIVYMGIASW, IIGGVMIGMILLSTLFNVIGS, MPWHWHLVLGGFAFGMFFMAT, WAYGILIGVMCVLIRVVNPAY, and GMMLAILFANLFAPLFDHVVV.

This sequence belongs to the NqrB/RnfD family. As to quaternary structure, composed of six subunits; NqrA, NqrB, NqrC, NqrD, NqrE and NqrF. It depends on riboflavin as a cofactor. FMN serves as cofactor.

The protein localises to the cell inner membrane. It carries out the reaction a ubiquinone + n Na(+)(in) + NADH + H(+) = a ubiquinol + n Na(+)(out) + NAD(+). NQR complex catalyzes the reduction of ubiquinone-1 to ubiquinol by two successive reactions, coupled with the transport of Na(+) ions from the cytoplasm to the periplasm. NqrA to NqrE are probably involved in the second step, the conversion of ubisemiquinone to ubiquinol. This Vibrio cholerae serotype O1 (strain ATCC 39541 / Classical Ogawa 395 / O395) protein is Na(+)-translocating NADH-quinone reductase subunit B.